We begin with the raw amino-acid sequence, 320 residues long: Methionine import ATP-binding protein MetN (320 aa).

In terms of domain architecture, ABC transporter spans 2-237 (IEIKNVSKYF…PSSEMKKLIG (236 aa)). 34–41 (GHSGAGKS) is a binding site for ATP.

Belongs to the ABC transporter superfamily. Methionine importer (TC 3.A.1.24) family. In terms of assembly, the complex is composed of two ATP-binding proteins (MetN), two transmembrane proteins (MetI) and a solute-binding protein (MetQ).

The protein resides in the cell membrane. It carries out the reaction L-methionine(out) + ATP + H2O = L-methionine(in) + ADP + phosphate + H(+). The enzyme catalyses D-methionine(out) + ATP + H2O = D-methionine(in) + ADP + phosphate + H(+). Functionally, part of the ABC transporter complex MetNIQ involved in methionine import. Responsible for energy coupling to the transport system. The sequence is that of Methionine import ATP-binding protein MetN from Clostridium acetobutylicum (strain ATCC 824 / DSM 792 / JCM 1419 / IAM 19013 / LMG 5710 / NBRC 13948 / NRRL B-527 / VKM B-1787 / 2291 / W).